A 216-amino-acid chain; its full sequence is Transmembrane protein 54 (216 aa).

A run of 4 helical transmembrane segments spans residues 22–42, 62–82, 94–114, and 155–175; these read LVLVVLGHVSFIAAAVLHGTM, ILSVTSAIVVILAGISAVILS, VFSLSVACALLSLTCALGLLA, and SSLCLWAISLIFCLAESMSAV.

Belongs to the TMEM54 family.

It localises to the membrane. The chain is Transmembrane protein 54 (Tmem54) from Rattus norvegicus (Rat).